A 718-amino-acid polypeptide reads, in one-letter code: Polyribonucleotide nucleotidyltransferase (718 aa).

Residues aspartate 493 and aspartate 499 each contribute to the Mg(2+) site. The region spanning 560–619 is the KH domain; that stretch reads PRMITIKINPEKIRDVIGKGGSVIRALTEETGTTIDISDDGVVTIASTSSEGMAEAKKRI. The S1 motif domain occupies 629-697; sequence GQVYEGTVLK…EKGRVRLSAK (69 aa).

Belongs to the polyribonucleotide nucleotidyltransferase family. Mg(2+) serves as cofactor.

The protein resides in the cytoplasm. The catalysed reaction is RNA(n+1) + phosphate = RNA(n) + a ribonucleoside 5'-diphosphate. Its function is as follows. Involved in mRNA degradation. Catalyzes the phosphorolysis of single-stranded polyribonucleotides processively in the 3'- to 5'-direction. In Paraburkholderia phytofirmans (strain DSM 17436 / LMG 22146 / PsJN) (Burkholderia phytofirmans), this protein is Polyribonucleotide nucleotidyltransferase.